A 1241-amino-acid polypeptide reads, in one-letter code: Phosphorylase b kinase regulatory subunit alpha, skeletal muscle isoform (1241 aa).

Residues Ser629, Ser730, Ser736, Ser739, Ser759, Ser812, Ser973, Ser982, and Ser986 each carry the phosphoserine modification. A calmodulin-binding region spans residues 811-841 (LSELYVKVGEIRHWGLIRYISGILRKKVEAL). Ser1008 carries the post-translational modification Phosphoserine; by autocatalysis. Ser1019 is modified (phosphoserine; by PKA). Phosphoserine is present on residues Ser1021 and Ser1024. The interval 1064-1104 (SKDSRQGQWQRRRRLDGALNRVPIGFYQKVWKILQKCHGLS) is calmodulin-binding. Residue Ser1131 is modified to Phosphoserine. Cys1238 is lipidated: S-farnesyl cysteine.

This sequence belongs to the phosphorylase b kinase regulatory chain family. In terms of assembly, hexadecamer of 4 heterotetramers, each composed of alpha, beta, gamma, and delta subunits. Alpha (PHKA1 or PHKA2) and beta (PHKB) are regulatory subunits, gamma (PHKG1 or PHKG2) is the catalytic subunit, and delta is calmodulin. Post-translationally, although the final Cys may be farnesylated, the terminal tripeptide is probably not removed, and the C-terminus is not methylated. As to expression, both isoforms are expressed in muscle.

The protein resides in the cell membrane. It functions in the pathway glycan biosynthesis; glycogen metabolism. Its activity is regulated as follows. By phosphorylation of various serine residues and by calcium. Phosphorylase b kinase catalyzes the phosphorylation of serine in certain substrates, including troponin I. The alpha chain may bind calmodulin. This Mus musculus (Mouse) protein is Phosphorylase b kinase regulatory subunit alpha, skeletal muscle isoform (Phka1).